Reading from the N-terminus, the 1072-residue chain is Carbamoyl phosphate synthase large chain (1072 aa).

A carboxyphosphate synthetic domain region spans residues 1 to 401; that stretch reads MPKRLDINTI…SLLKAVRSLE (401 aa). ATP is bound by residues Arg129, Arg169, Gly175, Gly176, Lys208, Ile210, Glu215, Gly241, Val242, His243, Gln284, and Glu298. Residues 133–327 form the ATP-grasp 1 domain; it reads RTLMQELNEP…IAKLAAKIAV (195 aa). Residues Gln284, Glu298, and Asn300 each contribute to the Mg(2+) site. Gln284, Glu298, and Asn300 together coordinate Mn(2+). An oligomerization domain region spans residues 402–546; that stretch reads LGIYHLELNH…YSTYGDENES (145 aa). The carbamoyl phosphate synthetic domain stretch occupies residues 547 to 929; it reads IVTERKSVMV…ALYKGLVAAG (383 aa). Positions 671–861 constitute an ATP-grasp 2 domain; that stretch reads EAALTELGIP…MANIATKVIL (191 aa). ATP is bound by residues Arg707, Arg746, Glu752, Gly777, Val778, His779, Ser780, Gln820, and Glu832. Mg(2+) contacts are provided by Gln820, Glu832, and Asn834. Positions 820, 832, and 834 each coordinate Mn(2+). Residues 930–1072 form the MGS-like domain; it reads ISIPTHGSVI…PTTRHEVVHA (143 aa). The interval 930–1072 is allosteric domain; that stretch reads ISIPTHGSVI…PTTRHEVVHA (143 aa).

This sequence belongs to the CarB family. As to quaternary structure, composed of two chains; the small (or glutamine) chain promotes the hydrolysis of glutamine to ammonia, which is used by the large (or ammonia) chain to synthesize carbamoyl phosphate. Tetramer of heterodimers (alpha,beta)4. Mg(2+) serves as cofactor. The cofactor is Mn(2+).

It catalyses the reaction hydrogencarbonate + L-glutamine + 2 ATP + H2O = carbamoyl phosphate + L-glutamate + 2 ADP + phosphate + 2 H(+). The enzyme catalyses hydrogencarbonate + NH4(+) + 2 ATP = carbamoyl phosphate + 2 ADP + phosphate + 2 H(+). It functions in the pathway amino-acid biosynthesis; L-arginine biosynthesis; carbamoyl phosphate from bicarbonate: step 1/1. It participates in pyrimidine metabolism; UMP biosynthesis via de novo pathway; (S)-dihydroorotate from bicarbonate: step 1/3. Its function is as follows. Large subunit of the glutamine-dependent carbamoyl phosphate synthetase (CPSase). CPSase catalyzes the formation of carbamoyl phosphate from the ammonia moiety of glutamine, carbonate, and phosphate donated by ATP, constituting the first step of 2 biosynthetic pathways, one leading to arginine and/or urea and the other to pyrimidine nucleotides. The large subunit (synthetase) binds the substrates ammonia (free or transferred from glutamine from the small subunit), hydrogencarbonate and ATP and carries out an ATP-coupled ligase reaction, activating hydrogencarbonate by forming carboxy phosphate which reacts with ammonia to form carbamoyl phosphate. This chain is Carbamoyl phosphate synthase large chain, found in Bacillus cytotoxicus (strain DSM 22905 / CIP 110041 / 391-98 / NVH 391-98).